Here is a 154-residue protein sequence, read N- to C-terminus: Large ribosomal subunit protein uL13 (154 aa).

This sequence belongs to the universal ribosomal protein uL13 family. Part of the 50S ribosomal subunit.

Functionally, this protein is one of the early assembly proteins of the 50S ribosomal subunit, although it is not seen to bind rRNA by itself. It is important during the early stages of 50S assembly. The protein is Large ribosomal subunit protein uL13 of Rhizobium meliloti (strain 1021) (Ensifer meliloti).